Here is a 545-residue protein sequence, read N- to C-terminus: Chaperonin GroEL (545 aa).

Residues 30-33 (TMGP), Lys51, 87-91 (DGTTT), Gly416, 479-481 (NAA), and Asp495 contribute to the ATP site.

The protein belongs to the chaperonin (HSP60) family. As to quaternary structure, forms a cylinder of 14 subunits composed of two heptameric rings stacked back-to-back. Interacts with the co-chaperonin GroES.

It localises to the cytoplasm. It carries out the reaction ATP + H2O + a folded polypeptide = ADP + phosphate + an unfolded polypeptide.. Together with its co-chaperonin GroES, plays an essential role in assisting protein folding. The GroEL-GroES system forms a nano-cage that allows encapsulation of the non-native substrate proteins and provides a physical environment optimized to promote and accelerate protein folding. This Nautilia profundicola (strain ATCC BAA-1463 / DSM 18972 / AmH) protein is Chaperonin GroEL.